The chain runs to 534 residues: 5,6-dihydroxyindole-2-carboxylic acid oxidase (534 aa).

Residues 1-23 (MLGPATFLPLTAALLLLIPGGRA) form the signal peptide. The Lumenal, melanosome portion of the chain corresponds to 24–477 (QFPRQCVTPE…WPSRALNFTE (454 aa)). 5 disulfides stabilise this stretch: Cys29/Cys40, Cys41/Cys65, Cys56/Cys99, Cys101/Cys110, and Cys113/Cys122. 2 N-linked (GlcNAc...) asparagine glycosylation sites follow: Asn96 and Asn104. Asn175 and Asn181 each carry an N-linked (GlcNAc...) asparagine glycan. 3 residues coordinate Zn(2+): His192, His215, and His224. 2 disulfides stabilise this stretch: Cys258–Cys261 and Cys290–Cys303. N-linked (GlcNAc...) asparagine glycosylation is found at Asn304 and Asn350. His377 and His381 together coordinate Zn(2+). N-linked (GlcNAc...) asparagine glycosylation occurs at Asn385. His404 lines the Zn(2+) pocket. A helical membrane pass occupies residues 478 to 501 (IITIAVVAALVLVAVIFAAASCAV). At 502–534 (HRSRKDDVHQPLLGEQYPRYSEEYERDASQSAV) the chain is on the cytoplasmic side.

It belongs to the tyrosinase family. The cofactor is Cu(2+). Zn(2+) serves as cofactor.

It localises to the melanosome membrane. The catalysed reaction is 2 5,6-dihydroxyindole-2-carboxylate + O2 = 2 indole-5,6-quinone-2-carboxylate + 2 H2O. Its pathway is pigment biosynthesis; melanin biosynthesis. Functionally, plays a role in melanin biosynthesis. Catalyzes the oxidation of 5,6-dihydroxyindole-2-carboxylic acid (DHICA) into indole-5,6-quinone-2-carboxylic acid. May regulate or influence the type of melanin synthesized. Also to a lower extent, capable of hydroxylating tyrosine and producing melanin. The polypeptide is 5,6-dihydroxyindole-2-carboxylic acid oxidase (TYRP1) (Ambystoma mexicanum (Axolotl)).